The primary structure comprises 473 residues: Purple acid phosphatase 1 (473 aa).

The signal sequence occupies residues 1–38 (MRLVVVGLWCLILGLILNPTKFCDAGVTSSYVRKSLSA). A glycan (N-linked (GlcNAc...) asparagine) is linked at N118. Position 172 (D172) interacts with Fe cation. N-linked (GlcNAc...) asparagine glycosylation is present at N180. 2 residues coordinate Fe cation: D201 and Y204. Residue D201 coordinates Mn(2+). Residue N238 participates in Mn(2+) binding. N238 contacts substrate. N-linked (GlcNAc...) asparagine glycosylation occurs at N311. Residue H323 participates in Mn(2+) binding. H333 acts as the Proton donor in catalysis. A Mn(2+)-binding site is contributed by H360. A substrate-binding site is contributed by 360–362 (HVH). Position 362 (H362) interacts with Fe cation. Residue N433 is glycosylated (N-linked (GlcNAc...) asparagine).

The protein belongs to the metallophosphoesterase superfamily. Purple acid phosphatase family. In terms of assembly, homodimer; disulfide-linked. Fe cation is required as a cofactor. Mn(2+) serves as cofactor. Requires Zn(2+) as cofactor. It depends on Cu(2+) as a cofactor. The cofactor is Mg(2+).

Its subcellular location is the secreted. The catalysed reaction is a phosphate monoester + H2O = an alcohol + phosphate. This Ipomoea batatas (Sweet potato) protein is Purple acid phosphatase 1 (PAP1).